The chain runs to 979 residues: Pro-apoptotic serine protease NMA111 (979 aa).

Positions 1-20 (MTIMNEGKKRSHSSSSDDHL) are disordered. Residues 65 to 255 (VVSIHFAQVA…LPLDRILRAL (191 aa)) form a serine protease region. Catalysis depends on charge relay system residues H103, D134, and S217. 2 consecutive PDZ domains span residues 273 to 361 (WLLK…RGGT) and 750 to 836 (SILH…VRDG).

Belongs to the peptidase S1C family.

It is found in the nucleus. In terms of biological role, nuclear serine protease which mediates apoptosis. This chain is Pro-apoptotic serine protease NMA111 (NMA111), found in Candida glabrata (strain ATCC 2001 / BCRC 20586 / JCM 3761 / NBRC 0622 / NRRL Y-65 / CBS 138) (Yeast).